The sequence spans 116 residues: MTDKKVTRLRRARKARLKMHELEAVRLCVFRSSQHIYAQVISADGSKVLASASTLDKELRDGATGNIDAATKVGKLVAERAKAAGVSQVAFDRSGFKYHGRVKALADAAREGGLEF.

It belongs to the universal ribosomal protein uL18 family. Part of the 50S ribosomal subunit; part of the 5S rRNA/L5/L18/L25 subcomplex. Contacts the 5S and 23S rRNAs.

Its function is as follows. This is one of the proteins that bind and probably mediate the attachment of the 5S RNA into the large ribosomal subunit, where it forms part of the central protuberance. This Pseudomonas entomophila (strain L48) protein is Large ribosomal subunit protein uL18.